The sequence spans 245 residues: 1-(5-phosphoribosyl)-5-[(5-phosphoribosylamino)methylideneamino] imidazole-4-carboxamide isomerase (245 aa).

Asp7 (proton acceptor) is an active-site residue. The active-site Proton donor is Asp129.

It belongs to the HisA/HisF family.

Its subcellular location is the cytoplasm. The enzyme catalyses 1-(5-phospho-beta-D-ribosyl)-5-[(5-phospho-beta-D-ribosylamino)methylideneamino]imidazole-4-carboxamide = 5-[(5-phospho-1-deoxy-D-ribulos-1-ylimino)methylamino]-1-(5-phospho-beta-D-ribosyl)imidazole-4-carboxamide. It participates in amino-acid biosynthesis; L-histidine biosynthesis; L-histidine from 5-phospho-alpha-D-ribose 1-diphosphate: step 4/9. The polypeptide is 1-(5-phosphoribosyl)-5-[(5-phosphoribosylamino)methylideneamino] imidazole-4-carboxamide isomerase (Salmonella arizonae (strain ATCC BAA-731 / CDC346-86 / RSK2980)).